The sequence spans 512 residues: Glutathione-binding protein GsiB (512 aa).

The first 26 residues, 1 to 26 (MTQFITHKWLAALGLASSIAAFPALA), serve as a signal peptide directing secretion.

It belongs to the bacterial solute-binding protein 5 family. In terms of assembly, the complex is composed of two ATP-binding proteins (GsiA), two transmembrane proteins (GsiC and GsiD) and a solute-binding protein (GsiB).

Its subcellular location is the periplasm. Part of the ABC transporter complex GsiABCD involved in glutathione import. Binds glutathione. The sequence is that of Glutathione-binding protein GsiB from Salmonella typhimurium (strain LT2 / SGSC1412 / ATCC 700720).